We begin with the raw amino-acid sequence, 170 residues long: ATP synthase subunit b, chloroplastic (170 aa).

The helical transmembrane segment at 15–35 (ILETNVINLAVVVGVVVFFVG) threads the bilayer.

Belongs to the ATPase B chain family. F-type ATPases have 2 components, F(1) - the catalytic core - and F(0) - the membrane proton channel. F(1) has five subunits: alpha(3), beta(3), gamma(1), delta(1), epsilon(1). F(0) has four main subunits: a(1), b(1), b'(1) and c(10-14). The alpha and beta chains form an alternating ring which encloses part of the gamma chain. F(1) is attached to F(0) by a central stalk formed by the gamma and epsilon chains, while a peripheral stalk is formed by the delta, b and b' chains.

Its subcellular location is the plastid. The protein localises to the chloroplast thylakoid membrane. Its function is as follows. F(1)F(0) ATP synthase produces ATP from ADP in the presence of a proton or sodium gradient. F-type ATPases consist of two structural domains, F(1) containing the extramembraneous catalytic core and F(0) containing the membrane proton channel, linked together by a central stalk and a peripheral stalk. During catalysis, ATP synthesis in the catalytic domain of F(1) is coupled via a rotary mechanism of the central stalk subunits to proton translocation. Functionally, component of the F(0) channel, it forms part of the peripheral stalk, linking F(1) to F(0). This Stigeoclonium helveticum (Green alga) protein is ATP synthase subunit b, chloroplastic.